We begin with the raw amino-acid sequence, 580 residues long: High affinity choline transporter 1 (580 aa).

The Extracellular segment spans residues 1–6; the sequence is MSFHVE. Residues 7–27 traverse the membrane as a helical segment; the sequence is GLVAIILFYLLIFLVGIWAAW. At 28 to 48 the chain is on the cytoplasmic side; that stretch reads KTKNSGNPEERSEAIIVGGRD. Residues 49–69 traverse the membrane as a helical segment; that stretch reads IGLLVGGFTMTATWVGGGYIN. The Extracellular segment spans residues 70 to 81; it reads GTAEAVYGPGCG. Residues 82–102 traverse the membrane as a helical segment; that stretch reads LAWAQAPIGYSLSLILGGLFF. Over 103–125 the chain is Cytoplasmic; sequence AKPMRSKGYVTMLDPFQQIYGKR. A helical transmembrane segment spans residues 126–146; it reads MGGLLFIPALMGEMFWAAAIF. At 147-164 the chain is on the extracellular side; it reads SALGATISVIIDVDVNIS. A helical membrane pass occupies residues 165-185; sequence VIVSALIAILYTLVGGLYSVA. The Cytoplasmic portion of the chain corresponds to 186 to 191; the sequence is YTDVVQ. The helical transmembrane segment at 192–212 threads the bilayer; it reads LFCIFIGLWISVPFALSHPAV. Topologically, residues 213–237 are extracellular; it reads TDIGFTAVHAKYQSPWLGTIESVEV. Residues 238–258 form a helical membrane-spanning segment; that stretch reads YTWLDNFLLLMLGGIPWQAYF. Residues 259–274 lie on the Cytoplasmic side of the membrane; the sequence is QRVLSSSSATYAQVLS. A helical membrane pass occupies residues 275-295; the sequence is FLAAFGCLVMALPAICIGAIG. The Extracellular segment spans residues 296 to 317; sequence ASTDWNQTAYGYPDPKTKEEAD. Residue Asn301 is glycosylated (N-linked (GlcNAc...) asparagine). A helical membrane pass occupies residues 318-338; that stretch reads MILPIVLQYLCPVYISFFGLG. Residues 339–376 lie on the Cytoplasmic side of the membrane; that stretch reads AVSAAVMSSADSSILSASSMFARNIYQLSFRQNASDKE. A helical transmembrane segment spans residues 377–397; it reads IVWVMRITVLVFGASATAMAL. The Extracellular portion of the chain corresponds to 398-406; sequence LTKTVYGLW. Residues 407-427 traverse the membrane as a helical segment; sequence YLSSDLVYIIIFPQLLCVLFI. Topologically, residues 428–435 are cytoplasmic; it reads KGTNTYGA. A helical transmembrane segment spans residues 436–456; the sequence is VAGYIFGLFLRITGGEPYLYL. Residues 457–481 are Extracellular-facing; it reads QPLIFYPGYYSDKNGIYNQRFPFKT. Residues 482 to 502 form a helical membrane-spanning segment; it reads LSMVTSFFTNICVSYLAKYLF. The tract at residues 502–580 is mediates interaction with SEC14L1; sequence FESGTLPPKL…EGSGTEDNLQ (79 aa). Residues 503 to 580 are Cytoplasmic-facing; it reads ESGTLPPKLD…EGSGTEDNLQ (78 aa). Residues 527-532 carry the Dileucine-like motif motif; the sequence is DKTILV.

Belongs to the sodium:solute symporter (SSF) (TC 2.A.21) family. As to quaternary structure, homooligomerizes at cell surface. Interacts with SEC14L1; may regulate SLC5A7. Post-translationally, phosphorylated by PKC and dephosphorylated by PP1/PP2A. Found in spinal cord, brain-stem, mid-brain and striatum. Specific for cholinergic neurons.

It localises to the presynaptic cell membrane. The protein localises to the cell projection. Its subcellular location is the axon. It is found in the early endosome membrane. The protein resides in the cytoplasmic vesicle. It localises to the secretory vesicle. The protein localises to the synaptic vesicle membrane. The catalysed reaction is choline(out) + n Na(+)(out) = choline(in) + n Na(+)(in). With respect to regulation, choline uptake activity is regulated by SLC5A7/CHT1 internalization (inactive form) from the cell surface and recycling of internalized SLC5A7/CHT1 into the cell surface (active form). Activated by extracellular chloride ion. Specifically inhibited by nanomolar concentrations of hemicholinium 3. High-affinity Na(+)-coupled choline transmembrane symporter. Functions as an electrogenic, voltage-dependent transporter with variable charge/choline stoichiometry. Choline uptake and choline-induced current is also Cl(-)-dependent where Cl(-) is likely a regulatory ion rather than cotransported ion. Plays a critical role in acetylcholine (ACh) synthesis by taking up the substrate choline from the synaptic cleft into the presynaptic nerve terminals after neurotransmitter release. SLC5A7/CHT1-mediated choline high-affinity transport in cholinergic neurons is the rate-limiting step for production of ACh, thereby facilitating communication by subsequent action potentials. Localized predominantly in presynaptic terminal intracellular organelles, and translocated to the plasma membrane in active form in response to neuronal activity. This is High affinity choline transporter 1 from Mus musculus (Mouse).